Here is a 349-residue protein sequence, read N- to C-terminus: NADH-quinone oxidoreductase subunit H (349 aa).

Helical transmembrane passes span 19 to 39 (VWTL…VAYL), 88 to 108 (GLFI…WAVV), 123 to 143 (LLFL…AGWA), 161 to 181 (VSYE…SASL), 202 to 222 (FLSW…ISGI), 249 to 269 (GMAF…VSIL), 284 to 304 (FLPD…FVFL), and 325 to 345 (VFIP…MSPL).

The protein belongs to the complex I subunit 1 family. As to quaternary structure, NDH-1 is composed of 14 different subunits. Subunits NuoA, H, J, K, L, M, N constitute the membrane sector of the complex.

Its subcellular location is the cell inner membrane. The catalysed reaction is a quinone + NADH + 5 H(+)(in) = a quinol + NAD(+) + 4 H(+)(out). NDH-1 shuttles electrons from NADH, via FMN and iron-sulfur (Fe-S) centers, to quinones in the respiratory chain. The immediate electron acceptor for the enzyme in this species is believed to be ubiquinone. Couples the redox reaction to proton translocation (for every two electrons transferred, four hydrogen ions are translocated across the cytoplasmic membrane), and thus conserves the redox energy in a proton gradient. This subunit may bind ubiquinone. The protein is NADH-quinone oxidoreductase subunit H of Aromatoleum aromaticum (strain DSM 19018 / LMG 30748 / EbN1) (Azoarcus sp. (strain EbN1)).